The following is a 240-amino-acid chain: Lipoprotein-releasing system ATP-binding protein LolD (240 aa).

The ABC transporter domain maps to I15–V240. Residue G51–S58 participates in ATP binding.

Belongs to the ABC transporter superfamily. Lipoprotein translocase (TC 3.A.1.125) family. As to quaternary structure, the complex is composed of two ATP-binding proteins (LolD) and two transmembrane proteins (LolC and LolE).

It is found in the cell inner membrane. Functionally, part of the ABC transporter complex LolCDE involved in the translocation of mature outer membrane-directed lipoproteins, from the inner membrane to the periplasmic chaperone, LolA. Responsible for the formation of the LolA-lipoprotein complex in an ATP-dependent manner. The protein is Lipoprotein-releasing system ATP-binding protein LolD of Xylella fastidiosa (strain Temecula1 / ATCC 700964).